Consider the following 859-residue polypeptide: ATP-dependent RNA helicase DDX24 (859 aa).

Position 17 is an N6-acetyllysine (lysine 17). Residue serine 60 is modified to Phosphoserine. A disordered region spans residues 61–170 (PAKNPSSLFS…KGLEPSQSTA (110 aa)). Position 71 is an N6-acetyllysine (lysine 71). Residues serine 82 and serine 94 each carry the phosphoserine modification. The span at 94–105 (SPKKKIKLKKSK) shows a compositional bias: basic residues. Over residues 106–115 (NVATEGTSTQ) the composition is skewed to polar residues. The span at 125–139 (LEAQGDDMVCDDPEA) shows a compositional bias: acidic residues. Residues 192–220 (SAWKDLFVPRPVLRALSFLGFSAPTPIQA) carry the Q motif motif. The 305-residue stretch at 224–528 (APAIRDKLDI…RILHKKHTKK (305 aa)) folds into the Helicase ATP-binding domain. An ATP-binding site is contributed by 237-244 (AETGSGKT). A disordered region spans residues 262–300 (NAAPPPSNTEAPPGETRTEAGAETRSPGKAEAESDALPD). A compositionally biased stretch (basic and acidic residues) spans 277–293 (TRTEAGAETRSPGKAEA). Phosphoserine is present on residues serine 287 and serine 295. Threonine 302 carries the post-translational modification Phosphothreonine. The tract at residues 326–376 (SDQALLFGDDDAGEGPSSLIREKPVPKQNENEEENLDKEQTGNLKQELDDK) is disordered. Residue lysine 370 forms a Glycyl lysine isopeptide (Lys-Gly) (interchain with G-Cter in SUMO2) linkage. The DEAD box motif lies at 471–474 (DEAD). Positions 578–723 (YLYYFLMQYP…LFPVQTKYMD (146 aa)) constitute a Helicase C-terminal domain. Residues lysine 624, lysine 808, and lysine 825 each participate in a glycyl lysine isopeptide (Lys-Gly) (interchain with G-Cter in SUMO2) cross-link. Polar residues-rich tracts occupy residues 799 to 814 (PLFT…TQSG) and 823 to 833 (PSKSESALSCL). The disordered stretch occupies residues 799 to 859 (PLFTESQKTK…EQPQPSTSAN (61 aa)).

It belongs to the DEAD box helicase family. DDX24/MAK5 subfamily. In terms of assembly, interacts with FADD. Interacts with RIPK1; this interaction disrupts RLR signaling activation of IFN-dependent transcription factor IRF7. Interacts with NIP7. Interacts with EP300; this interaction prevents TP53 acetylation mediated by EP300. (Microbial infection) Interacts with HIV-1 virus Gag and Rev proteins. In terms of processing, ubiquitinated by MDM2 without targeting DDX24 for proteasomal degradation. Instead, polyubiquitinated DDX24 promotes interaction with NIP7, a component of pre-rRNP processing complex, and associates with pre-rRNA molecules and pre-ribosomal particles. As to expression, ubiquitous. Most abundant in heart and brain, but with lowest levels in thymus and small intestine.

Its subcellular location is the cytoplasm. The protein localises to the nucleus. The enzyme catalyses ATP + H2O = ADP + phosphate + H(+). Functionally, ATP-dependent RNA helicase that plays a role in various aspects of RNA metabolism including pre-mRNA splicing and is thereby involved in different biological processes such as cell cycle regulation or innate immunity. Plays an inhibitory role in TP53 transcriptional activity and subsequently in TP53 controlled cell growth arrest and senescence by inhibiting its EP300 mediated acetylation. Negatively regulates cytosolic RNA-mediated innate immune signaling at least in part by affecting RIPK1/IRF7 interactions. Alternatively, possesses antiviral activity by recognizing gammaherpesvirus transcripts in the context of lytic reactivation. Plays an essential role in cell cycle regulation in vascular smooth muscle cells by interacting with and regulating FANCA (Fanconi anemia complementation group A) mRNA. Its function is as follows. (Microbial infection) Plays a positive role in HIV-1 infection by promoting Rev-dependent nuclear export of viral RNAs and their packaging into virus particles. The chain is ATP-dependent RNA helicase DDX24 (DDX24) from Homo sapiens (Human).